The following is a 414-amino-acid chain: Multifunctional CCA protein (414 aa).

ATP is bound by residues G8 and R11. 2 residues coordinate CTP: G8 and R11. Mg(2+) is bound by residues D21 and D23. Residues R91, R143, and R146 each coordinate ATP. CTP is bound by residues R91, R143, and R146. Residues 232–333 (TGVHVMMVID…TRLVERCDAL (102 aa)) form the HD domain.

Belongs to the tRNA nucleotidyltransferase/poly(A) polymerase family. Bacterial CCA-adding enzyme type 1 subfamily. Monomer. Can also form homodimers and oligomers. Mg(2+) is required as a cofactor. It depends on Ni(2+) as a cofactor.

The catalysed reaction is a tRNA precursor + 2 CTP + ATP = a tRNA with a 3' CCA end + 3 diphosphate. It carries out the reaction a tRNA with a 3' CCA end + 2 CTP + ATP = a tRNA with a 3' CCACCA end + 3 diphosphate. Catalyzes the addition and repair of the essential 3'-terminal CCA sequence in tRNAs without using a nucleic acid template. Adds these three nucleotides in the order of C, C, and A to the tRNA nucleotide-73, using CTP and ATP as substrates and producing inorganic pyrophosphate. tRNA 3'-terminal CCA addition is required both for tRNA processing and repair. Also involved in tRNA surveillance by mediating tandem CCA addition to generate a CCACCA at the 3' terminus of unstable tRNAs. While stable tRNAs receive only 3'-terminal CCA, unstable tRNAs are marked with CCACCA and rapidly degraded. The sequence is that of Multifunctional CCA protein from Cupriavidus metallidurans (strain ATCC 43123 / DSM 2839 / NBRC 102507 / CH34) (Ralstonia metallidurans).